A 251-amino-acid chain; its full sequence is Ubiquinone/menaquinone biosynthesis C-methyltransferase UbiE (251 aa).

S-adenosyl-L-methionine-binding positions include T74, D95, 123 to 124 (NA), and S140.

It belongs to the class I-like SAM-binding methyltransferase superfamily. MenG/UbiE family.

The catalysed reaction is a 2-demethylmenaquinol + S-adenosyl-L-methionine = a menaquinol + S-adenosyl-L-homocysteine + H(+). The enzyme catalyses a 2-methoxy-6-(all-trans-polyprenyl)benzene-1,4-diol + S-adenosyl-L-methionine = a 5-methoxy-2-methyl-3-(all-trans-polyprenyl)benzene-1,4-diol + S-adenosyl-L-homocysteine + H(+). It functions in the pathway quinol/quinone metabolism; menaquinone biosynthesis; menaquinol from 1,4-dihydroxy-2-naphthoate: step 2/2. The protein operates within cofactor biosynthesis; ubiquinone biosynthesis. In terms of biological role, methyltransferase required for the conversion of demethylmenaquinol (DMKH2) to menaquinol (MKH2) and the conversion of 2-polyprenyl-6-methoxy-1,4-benzoquinol (DDMQH2) to 2-polyprenyl-3-methyl-6-methoxy-1,4-benzoquinol (DMQH2). The protein is Ubiquinone/menaquinone biosynthesis C-methyltransferase UbiE of Salmonella paratyphi A (strain AKU_12601).